The chain runs to 492 residues: Protein nucleotidyltransferase YdiU (492 aa).

Residues G91, G93, R94, K114, D126, G127, R180, and R187 each coordinate ATP. Residue D256 is the Proton acceptor of the active site. N257 and D266 together coordinate Mg(2+). ATP is bound at residue D266.

Belongs to the SELO family. Mg(2+) is required as a cofactor. The cofactor is Mn(2+).

The catalysed reaction is L-seryl-[protein] + ATP = 3-O-(5'-adenylyl)-L-seryl-[protein] + diphosphate. It catalyses the reaction L-threonyl-[protein] + ATP = 3-O-(5'-adenylyl)-L-threonyl-[protein] + diphosphate. It carries out the reaction L-tyrosyl-[protein] + ATP = O-(5'-adenylyl)-L-tyrosyl-[protein] + diphosphate. The enzyme catalyses L-histidyl-[protein] + UTP = N(tele)-(5'-uridylyl)-L-histidyl-[protein] + diphosphate. The catalysed reaction is L-seryl-[protein] + UTP = O-(5'-uridylyl)-L-seryl-[protein] + diphosphate. It catalyses the reaction L-tyrosyl-[protein] + UTP = O-(5'-uridylyl)-L-tyrosyl-[protein] + diphosphate. Its function is as follows. Nucleotidyltransferase involved in the post-translational modification of proteins. It can catalyze the addition of adenosine monophosphate (AMP) or uridine monophosphate (UMP) to a protein, resulting in modifications known as AMPylation and UMPylation. This chain is Protein nucleotidyltransferase YdiU, found in Synechococcus sp. (strain ATCC 27144 / PCC 6301 / SAUG 1402/1) (Anacystis nidulans).